We begin with the raw amino-acid sequence, 452 residues long: tRNA modification GTPase MnmE (452 aa).

(6S)-5-formyl-5,6,7,8-tetrahydrofolate is bound by residues arginine 21, glutamate 78, and lysine 118. The TrmE-type G domain maps to 214–375; that stretch reads GMKVVIAGRP…LREHLKQAMG (162 aa). Asparagine 224 lines the K(+) pocket. GTP is bound by residues 224–229, 243–249, and 268–271; these read NAGKSS, TDIAGTT, and DTAG. Serine 228 lines the Mg(2+) pocket. K(+) contacts are provided by threonine 243, isoleucine 245, and threonine 248. Residue threonine 249 coordinates Mg(2+). Lysine 452 lines the (6S)-5-formyl-5,6,7,8-tetrahydrofolate pocket.

This sequence belongs to the TRAFAC class TrmE-Era-EngA-EngB-Septin-like GTPase superfamily. TrmE GTPase family. Homodimer. Heterotetramer of two MnmE and two MnmG subunits. K(+) serves as cofactor.

It is found in the cytoplasm. Exhibits a very high intrinsic GTPase hydrolysis rate. Involved in the addition of a carboxymethylaminomethyl (cmnm) group at the wobble position (U34) of certain tRNAs, forming tRNA-cmnm(5)s(2)U34. The protein is tRNA modification GTPase MnmE of Haemophilus influenzae (strain PittGG).